The sequence spans 448 residues: Inositol polyphosphate 5-phosphatase K (448 aa).

Residues 16–318 (IHVVTWNVAS…SDHKPVSGTF (303 aa)) form a catalytic region. The segment at 318-448 (FDLELKPLVS…DPLGEAQPQI (131 aa)) is required for interaction with GPR78 and PAK1. The tract at residues 321–448 (ELKPLVSAPL…DPLGEAQPQI (128 aa)) is required for ruffle localization.

It belongs to the inositol 1,4,5-trisphosphate 5-phosphatase type II family. As to quaternary structure, interacts with GPR78; necessary for INPP5K localization at the endoplasmic reticulum. Interacts with PAK1; competes with GPR78. As to expression, ubiquitously expressed with highest levels in skeletal muscle, heart and kidney.

The protein localises to the endoplasmic reticulum. Its subcellular location is the cytoplasm. The enzyme catalyses 1D-myo-inositol 1,4,5-trisphosphate + H2O = 1D-myo-inositol 1,4-bisphosphate + phosphate. It catalyses the reaction 1D-myo-inositol 1,3,4,5-tetrakisphosphate + H2O = 1D-myo-inositol 1,3,4-trisphosphate + phosphate. The catalysed reaction is a 1,2-diacyl-sn-glycero-3-phospho-(1D-myo-inositol-4,5-bisphosphate) + H2O = a 1,2-diacyl-sn-glycero-3-phospho-(1D-myo-inositol 4-phosphate) + phosphate. It carries out the reaction a 1,2-diacyl-sn-glycero-3-phospho-(1D-myo-inositol-3,4,5-trisphosphate) + H2O = a 1,2-diacyl-sn-glycero-3-phospho-(1D-myo-inositol-3,4-bisphosphate) + phosphate. The enzyme catalyses 1,2-dioctanoyl-sn-glycero-3-phospho-(1D-myo-inositol-3,4,5-trisphosphate) + H2O = 1,2-dioctanoyl-sn-glycero-3-phospho-(1D-myo-inositol-3,4-bisphosphate) + phosphate. Inositol 5-phosphatase which acts on inositol 1,4,5-trisphosphate, inositol 1,3,4,5-tetrakisphosphate, phosphatidylinositol 4,5-bisphosphate and phosphatidylinositol 3,4,5-trisphosphate. Has 6-fold higher affinity for phosphatidylinositol 4,5-bisphosphate than for inositol 1,4,5-trisphosphate. Negatively regulates assembly of the actin cytoskeleton. Controls insulin-dependent glucose uptake among inositol 3,4,5-trisphosphate phosphatases; therefore, is the specific regulator for insulin signaling in skeletal muscle. In Homo sapiens (Human), this protein is Inositol polyphosphate 5-phosphatase K.